The sequence spans 166 residues: UPF0260 protein GbCGDNIH1_2046 (166 aa).

The segment at 147–166 (RFPRPRRPRQEPAGKTADES) is disordered. Basic and acidic residues predominate over residues 154–166 (PRQEPAGKTADES).

Belongs to the UPF0260 family.

The chain is UPF0260 protein GbCGDNIH1_2046 from Granulibacter bethesdensis (strain ATCC BAA-1260 / CGDNIH1).